A 288-amino-acid chain; its full sequence is MSSRKQASQTRGQQSAEEDNFKKPTRSNMQRSKMRGAASGKKSAGSQPKNLDPALPGRWGGRSAENPPSGSVRKTRKNKQKTPGNGDGGSTSEVPQPPRKKRARADPTVESEEAFKSRMEVKVKIPEELKPWLVEDWDLVTRQKQLFQLPAKKNVDAILEEYANCKKSQGNVDNKEYAVNEVVGGIKEYFNVMLGTQLLYKFERPQYAEILLAHPDAPMSQIYGAPHLLRLFVRIGAMLAYTPLDEKSLALLLGYLHDFLKYLAKNSASLFTASDYKVASADYHRKAL.

Polar residues predominate over residues 1-15 (MSSRKQASQTRGQQS). Positions 1–115 (MSSRKQASQT…DPTVESEEAF (115 aa)) are disordered. Serine 71 bears the Phosphoserine mark. Residues 117-288 (SRMEVKVKIP…ASADYHRKAL (172 aa)) form the MRG domain.

In terms of assembly, component of the NuA4 histone acetyltransferase complex which contains the catalytic subunit KAT5/TIP60 and the subunits EP400, TRRAP/PAF400, BRD8/SMAP, EPC1, DMAP1/DNMAP1, RUVBL1/TIP49, RUVBL2, ING3, actin, ACTL6A/BAF53A, MORF4L1/MRG15, MORF4L2/MRGX, MRGBP, YEATS4/GAS41 and VPS72/YL1. The NuA4 complex interacts with MYC and the adenovirus E1A protein. MORF4L1 may also participate in the formation of NuA4 related complexes which lack the KAT5/TIP60 catalytic subunit, but which include the SWI/SNF related protein SRCAP. Component of the MSIN3A histone deacetylase complex, which includes SIN3A, HDAC2, ARID4B, MORF4L1, RBBP4/RbAp48, and RBBP7/RbAp46. Interacts with MRFAP1 and RB1. May also interact with one or more as yet undefined members of the TLE (transducin-like enhancer of split) family of transcriptional repressors.

It is found in the nucleus. In terms of biological role, component of the NuA4 histone acetyltransferase complex which is involved in transcriptional activation of select genes principally by acetylation of nucleosomal histone H4 and H2A. This modification may both alter nucleosome - DNA interactions and promote interaction of the modified histones with other proteins which positively regulate transcription. This complex may be required for the activation of transcriptional programs associated with oncogene and proto-oncogene mediated growth induction, tumor suppressor mediated growth arrest and replicative senescence, apoptosis, and DNA repair. The NuA4 complex ATPase and helicase activities seem to be, at least in part, contributed by the association of RUVBL1 and RUVBL2 with EP400. NuA4 may also play a direct role in DNA repair when directly recruited to sites of DNA damage. Also a component of the MSIN3A complex which acts to repress transcription by deacetylation of nucleosomal histones. In Rattus norvegicus (Rat), this protein is Mortality factor 4-like protein 2 (Morf4l2).